The chain runs to 350 residues: ATPase GET3 (350 aa).

26–33 (KGGVGKTT) lines the ATP pocket. Asp57 is an active-site residue. The ATP site is built by Glu241 and Asn268. Cys281 and Cys284 together coordinate Zn(2+).

It belongs to the arsA ATPase family. Homodimer. Component of the Golgi to ER traffic (GET) complex, which is composed of GET1, GET2 and GET3. Within the complex, GET1 and GET2 form a heterotetramer which is stabilized by phosphatidylinositol binding and which binds to the GET3 homodimer. Interacts with the chloride channel protein GEF1.

It is found in the cytoplasm. It localises to the endoplasmic reticulum. The protein localises to the golgi apparatus. In terms of biological role, ATPase required for the post-translational delivery of tail-anchored (TA) proteins to the endoplasmic reticulum. Recognizes and selectively binds the transmembrane domain of TA proteins in the cytosol. This complex then targets to the endoplasmic reticulum by membrane-bound receptors GET1 and GET2, where the tail-anchored protein is released for insertion. This process is regulated by ATP binding and hydrolysis. ATP binding drives the homodimer towards the closed dimer state, facilitating recognition of newly synthesized TA membrane proteins. ATP hydrolysis is required for insertion. Subsequently, the homodimer reverts towards the open dimer state, lowering its affinity for the GET1-GET2 receptor, and returning it to the cytosol to initiate a new round of targeting. Cooperates with the HDEL receptor ERD2 to mediate the ATP-dependent retrieval of resident ER proteins that contain a C-terminal H-D-E-L retention signal from the Golgi to the ER. Involved in low-level resistance to the oxyanions arsenite and arsenate, and in heat tolerance. This is ATPase GET3 from Candida glabrata (strain ATCC 2001 / BCRC 20586 / JCM 3761 / NBRC 0622 / NRRL Y-65 / CBS 138) (Yeast).